The following is a 1462-amino-acid chain: Glucosyltransferase-S (1462 aa).

A disordered region spans residues 35–164; sequence SSVSAETEQQ…RQTAAQENKN (130 aa). The segment covering 37-52 has biased composition (polar residues); the sequence is VSAETEQQTSDKVVTQ. The segment covering 71-85 has biased composition (low complexity); sequence TKQAQTEQTQAQSQA. Over residues 86 to 108 the composition is skewed to polar residues; the sequence is NVADTSTSITKETPSQNITTQAN. The span at 109–133 shows a compositional bias: basic and acidic residues; the sequence is SDDKTVTNTKSEEAQTSEERTKQAE. The span at 134–149 shows a compositional bias: low complexity; the sequence is EAQATASSQALTQAKA. The segment covering 154–163 has biased composition (polar residues); sequence QRQTAAQENK. Cell wall-binding repeat units lie at residues 171 to 190, 192 to 211, 1095 to 1115, 1116 to 1136, 1137 to 1156, 1180 to 1201, 1202 to 1221, 1223 to 1244, 1246 to 1266, 1267 to 1286, 1310 to 1330, 1331 to 1350, 1352 to 1372, and 1374 to 1394; these read IPNVKQIDGKYYYIGSDGQP, KNFALTVNNKVLYFDKNTGA, STGFVNDGNGMTFYSTSGYQA, KNSFVQDAKGNWYYFDNNGHM, VYGLQHLNGEVQYFLSNGVQ, SNGYYSFDNDSKWRYFDASGVM, AVGLKTINGNTQYFDQDGYQ, KGAWITGSDGKKRYFDDGSGNM, VNRFANDKNGDWYYLNSDGIA, LVGVQTINGKTYYFGQDGKQ, RNIFATDSQNNWYYFGSDGVA, VTGSQTIAGKKLYFASDGKQ, KGSFVTYNGKVHYYHADSGEL, and VNRFEADKDGNWYYLDSNGEA.

The protein belongs to the glycosyl hydrolase 70 family.

The protein resides in the secreted. It carries out the reaction [(1-&gt;6)-alpha-D-glucosyl](n) + sucrose = [(1-&gt;6)-alpha-D-glucosyl](n+1) + D-fructose. In terms of biological role, production of extracellular glucans, that are thought to play a key role in the development of the dental plaque because of their ability to adhere to smooth surfaces and mediate the aggregation of bacterial cells and food debris. The sequence is that of Glucosyltransferase-S (gtfD) from Streptococcus mutans serotype c (strain ATCC 700610 / UA159).